The chain runs to 562 residues: Exonuclease subunit 2 (562 aa).

36-43 contributes to the ATP binding site; that stretch reads GKNGGGKS.

To phage T5 protein D13 and to yeast RAD52. In terms of assembly, consists of two subunits: Gp47 and Gp46.

In terms of biological role, exonuclease involved in phage DNA recombination, replication, and repair. The sequence is that of Exonuclease subunit 2 (46) from Escherichia phage RB69 (Bacteriophage RB69).